The chain runs to 438 residues: RNA polymerase sigma factor SigA (438 aa).

Basic residues predominate over residues 1-11 (MKKSKSKKKAA). The segment at 1 to 69 (MKKSKSKKKA…PLDLEGPLEA (69 aa)) is disordered. Residues 12–26 (KAQEVEVKEPVKEPE) are compositionally biased toward basic and acidic residues. 2 stretches are compositionally biased toward acidic residues: residues 27-45 (PLPE…EPDP) and 52-69 (PELE…PLEA). Residues 93-128 (SDPVRQYLHEIGQVPLLTLEEEIDLARKVEEGMEAI) are sigma-70 factor domain-1. Residues 202 to 272 (LIEANLRLVV…NRAIADQART (71 aa)) are sigma-70 factor domain-2. Residues 226-229 (DLIQ) carry the Interaction with polymerase core subunit RpoC motif. The tract at residues 281-359 (ETINKLSRTA…DENLPSPVEA (79 aa)) is sigma-70 factor domain-3. The interval 372–424 (ALSKLSEREAMVLKLRKGLIDGREHTLEEVGAYFGVTRERIRQIENKALRKLK) is sigma-70 factor domain-4. The H-T-H motif DNA-binding region spans 398–417 (LEEVGAYFGVTRERIRQIEN).

This sequence belongs to the sigma-70 factor family. RpoD/SigA subfamily. Interacts transiently with the RNA polymerase catalytic core formed by RpoA, RpoB, RpoC and RpoZ (2 alpha, 1 beta, 1 beta' and 1 omega subunit) to form the RNA polymerase holoenzyme that can initiate transcription.

Its subcellular location is the cytoplasm. In terms of biological role, sigma factors are initiation factors that promote the attachment of RNA polymerase to specific initiation sites and are then released. This sigma factor is the primary sigma factor during exponential growth. The chain is RNA polymerase sigma factor SigA from Thermus aquaticus.